The sequence spans 942 residues: Endoprotease bli-4 (942 aa).

Positions 1–22 (MRISIGRIAWQILAVLIAVAFT) are cleaved as a signal peptide. A propeptide spanning residues 23-116 (IEHDSICDES…EQRPKKRVKR (94 aa)) is cleaved from the precursor. Residues 117 to 871 (DYILLDNDVH…TLLIDSNKSS (755 aa)) lie on the Lumenal side of the membrane. Asp124 contacts Ca(2+). Residues 130-160 (PFRRSVLNRDGTRRAQRQQPQSPREIPSLPF) are disordered. The Peptidase S8 domain maps to 168–483 (QWYLHGGAVG…YGLIDGGALV (316 aa)). Asn195 carries an N-linked (GlcNAc...) asparagine glycan. Asp202 functions as the Charge relay system in the catalytic mechanism. Substrate is bound at residue Asp203. Residues Asp211, Asp223, Asp228, and Asp230 each contribute to the Ca(2+) site. Residues 211–242 (DLAANYDPLASTDINDHDDDPTPQNNGDNKHG) form a disordered region. Position 238-239 (238-239 (DN)) interacts with substrate. The active-site Charge relay system is His241. Ca(2+) contacts are provided by Leu252, Asn255, Gln257, and Gly259. Intrachain disulfides connect Cys258-Cys407 and Cys350-Cys380. Substrate is bound by residues Glu283, 300–305 (SWGPED), Asp311, and 339–342 (ASGN). Residue Asp305 coordinates Ca(2+). Asp348 lines the Ca(2+) pocket. Residues Asp353 and Tyr355 each contribute to the substrate site. Glu378 contributes to the Ca(2+) binding site. Ser415 functions as the Charge relay system in the catalytic mechanism. A substrate-binding site is contributed by Ser415. The P/Homo B domain occupies 491–629 (TVPEQHICTY…TLLLYGTADP (139 aa)). Residues Cys498 and Cys527 are joined by a disulfide bond. The N-linked (GlcNAc...) asparagine glycan is linked to Asn519. FU repeat units lie at residues 674–723 (NCHD…YYLD), 725–777 (DKCK…LVAD), and 804–850 (GKCD…STKS). Residue Asn868 is glycosylated (N-linked (GlcNAc...) asparagine). Residues 872–892 (GFGLMFWIVVSLIAACGICAC) form a helical membrane-spanning segment. The Cytoplasmic segment spans residues 893-942 (KKCASETKSSNVEYAPLAQYNATNGAINLGAHTDDEDDDEDEVFVNPQIV). The tract at residues 922 to 942 (GAHTDDEDDDEDEVFVNPQIV) is disordered. Residues 926–935 (DDEDDDEDEV) are compositionally biased toward acidic residues.

This sequence belongs to the peptidase S8 family. Furin subfamily. Requires Ca(2+) as cofactor. In terms of tissue distribution, in larvae and adults, expressed in all hypodermal cells, vulva and ventral nerve cords. Most highly expressed isoform in the embryonic epidermis. As to expression, expressed primarily in the germline. In terms of tissue distribution, expressed primarily in pharyngeal epithelial cells.

It localises to the membrane. Serine endoprotease which cleaves proproteins at paired basic amino acids at the consensus RX(K/R)R motif. Involved in N-terminal processing of cuticle collagens and plays a role in cuticle biosynthesis. May cleave both sqt-3 and dpy-17 collagens to promote their secretion. Acts in ASEL sensory neurons to regulate high salt chemotaxis responses probably by cleaving insulin-like protein ins-6 into its mature and active form. Essential for embryonic and larval development. Its function is as follows. Involved in cuticle biosynthesis but dispensable for larval development. In Caenorhabditis elegans, this protein is Endoprotease bli-4 (bli-4).